Here is a 126-residue protein sequence, read N- to C-terminus: Holo-[acyl-carrier-protein] synthase (126 aa).

2 residues coordinate Mg(2+): Asp-9 and Glu-57.

The protein belongs to the P-Pant transferase superfamily. AcpS family. The cofactor is Mg(2+).

The protein resides in the cytoplasm. The enzyme catalyses apo-[ACP] + CoA = holo-[ACP] + adenosine 3',5'-bisphosphate + H(+). In terms of biological role, transfers the 4'-phosphopantetheine moiety from coenzyme A to a Ser of acyl-carrier-protein. This chain is Holo-[acyl-carrier-protein] synthase, found in Alteromonas mediterranea (strain DSM 17117 / CIP 110805 / LMG 28347 / Deep ecotype).